A 1287-amino-acid polypeptide reads, in one-letter code: DNA-directed RNA polymerase 147 kDa polypeptide (1287 aa).

This sequence belongs to the poxviridae DNA-directed RNA polymerase 147 kDa subunit family. As to quaternary structure, the DNA-dependent RNA polymerase used for intermediate and late genes expression consists of eight subunits Rpo30/OPG66, Rpo7/OPG90, Rpo22/OPG103, Rpo147/OPG105, Rpo18/OPG119, Rpo19/OPG131, Rpo132/OPG151 and Rpo35/OPG156. The same holoenzyme, with the addition of the transcription-specificity factor OPG109, is used for early gene expression.

It is found in the virion. It carries out the reaction RNA(n) + a ribonucleoside 5'-triphosphate = RNA(n+1) + diphosphate. Part of the DNA-dependent RNA polymerase which catalyzes the transcription of viral DNA into RNA using the four ribonucleoside triphosphates as substrates. Responsible for the transcription of early, intermediate and late genes. DNA-dependent RNA polymerase associates with the early transcription factor (ETF), itself composed of OPG118 and OPG133, thereby allowing the early genes transcription. Late transcription, and probably also intermediate transcription, require newly synthesized RNA polymerase. In Fowlpox virus (strain NVSL) (FPV), this protein is DNA-directed RNA polymerase 147 kDa polypeptide (OPG105).